The sequence spans 67 residues: Beta-defensin 103A (67 aa).

The first 22 residues, 1-22 (MRIHFLLFALLFLFLMPVPGNG), serve as a signal peptide directing secretion. Disulfide bonds link cysteine 33-cysteine 62, cysteine 40-cysteine 55, and cysteine 45-cysteine 63.

The protein belongs to the beta-defensin family.

The protein localises to the secreted. Exhibits antimicrobial activity against Gram-positive and Gram-negative bacteria. The sequence is that of Beta-defensin 103A (DEFB103A) from Equus caballus (Horse).